Consider the following 596-residue polypeptide: Probable tripeptidyl-peptidase SED2 (596 aa).

The first 16 residues, 1–16, serve as a signal peptide directing secretion; the sequence is MRLLKFVCLLASVAAA. The propeptide at 17 to 203 is removed in mature form; sequence KPTPGASHKV…LESMSVEEFA (187 aa). The 387-residue stretch at 210–596 folds into the Peptidase S53 domain; sequence LVTTACLREL…NFQALTKVLP (387 aa). N-linked (GlcNAc...) asparagine glycosylation occurs at N265. Active-site charge relay system residues include E286 and D290. Residue N403 is glycosylated (N-linked (GlcNAc...) asparagine). Catalysis depends on S501, which acts as the Charge relay system. 2 residues coordinate Ca(2+): D543 and I544. An N-linked (GlcNAc...) asparagine glycan is attached at N572. G576 and D578 together coordinate Ca(2+).

Requires Ca(2+) as cofactor.

The protein resides in the secreted. It is found in the extracellular space. The catalysed reaction is Release of an N-terminal tripeptide from a polypeptide.. Functionally, secreted tripeptidyl-peptidase which degrades proteins at acidic pHs and is involved in virulence. The sequence is that of Probable tripeptidyl-peptidase SED2 (SED2) from Arthroderma benhamiae (strain ATCC MYA-4681 / CBS 112371) (Trichophyton mentagrophytes).